Reading from the N-terminus, the 396-residue chain is Flavohemoprotein (396 aa).

In terms of domain architecture, Globin spans 1 to 136; that stretch reads MLDAQTIATV…LANVFINREA (136 aa). Residue H85 participates in heme b binding. Active-site charge relay system residues include Y95 and E135. A reductase region spans residues 147-396; that stretch reads GGWEGTRDFR…YECFGPHKVL (250 aa). The region spanning 150-255 is the FAD-binding FR-type domain; sequence EGTRDFRIVA…VAPAGDFFMA (106 aa). FAD contacts are provided by residues Y188 and 204–207; that span reads RQYS. 268 to 273 provides a ligand contact to NADP(+); sequence GVGQTP. 389 to 392 lines the FAD pocket; it reads CFGP.

This sequence belongs to the globin family. Two-domain flavohemoproteins subfamily. The protein in the C-terminal section; belongs to the flavoprotein pyridine nucleotide cytochrome reductase family. It depends on heme b as a cofactor. Requires FAD as cofactor.

The enzyme catalyses 2 nitric oxide + NADPH + 2 O2 = 2 nitrate + NADP(+) + H(+). It carries out the reaction 2 nitric oxide + NADH + 2 O2 = 2 nitrate + NAD(+) + H(+). Is involved in NO detoxification in an aerobic process, termed nitric oxide dioxygenase (NOD) reaction that utilizes O(2) and NAD(P)H to convert NO to nitrate, which protects the bacterium from various noxious nitrogen compounds. Therefore, plays a central role in the inducible response to nitrosative stress. The protein is Flavohemoprotein of Shigella flexneri.